Reading from the N-terminus, the 429-residue chain is Phosphoribosylamine--glycine ligase (429 aa).

The 208-residue stretch at 109-316 folds into the ATP-grasp domain; that stretch reads KDFLARHHIP…LVELCLAACD (208 aa). 135 to 196 contacts ATP; that stretch reads LREKGAPIVV…EEFLDGEEAS (62 aa). The interval 209-231 is disordered; it reads MATSQDHKRVGENDTGLNTGGMG. E286 and N288 together coordinate Mg(2+).

Belongs to the GARS family. It depends on Mg(2+) as a cofactor. The cofactor is Mn(2+).

It carries out the reaction 5-phospho-beta-D-ribosylamine + glycine + ATP = N(1)-(5-phospho-beta-D-ribosyl)glycinamide + ADP + phosphate + H(+). Its pathway is purine metabolism; IMP biosynthesis via de novo pathway; N(1)-(5-phospho-D-ribosyl)glycinamide from 5-phospho-alpha-D-ribose 1-diphosphate: step 2/2. The sequence is that of Phosphoribosylamine--glycine ligase from Pasteurella multocida (strain Pm70).